The chain runs to 239 residues: Protein GrpE (239 aa).

2 disordered regions span residues 1–54 and 208–239; these read MIEN…ELKN and SMGPGKQNSQEEVEKDKVEGDIDSEENTSEDV. Over residues 19–42 the composition is skewed to polar residues; the sequence is QDNALENVSSAQELTTENNELSSQ. Residues 43–53 are compositionally biased toward basic and acidic residues; it reads KTEEINTEELK. The segment covering 228–239 has biased composition (acidic residues); the sequence is DIDSEENTSEDV.

This sequence belongs to the GrpE family. In terms of assembly, homodimer.

The protein localises to the cytoplasm. Functionally, participates actively in the response to hyperosmotic and heat shock by preventing the aggregation of stress-denatured proteins, in association with DnaK and GrpE. It is the nucleotide exchange factor for DnaK and may function as a thermosensor. Unfolded proteins bind initially to DnaJ; upon interaction with the DnaJ-bound protein, DnaK hydrolyzes its bound ATP, resulting in the formation of a stable complex. GrpE releases ADP from DnaK; ATP binding to DnaK triggers the release of the substrate protein, thus completing the reaction cycle. Several rounds of ATP-dependent interactions between DnaJ, DnaK and GrpE are required for fully efficient folding. In Prochlorococcus marinus (strain AS9601), this protein is Protein GrpE.